A 545-amino-acid polypeptide reads, in one-letter code: MSLNMYLGEVQGQTQSMNAVCNATIQGMEQVIQSIDAFAIDTVLQGQTYSSAKSFFVQTFRPLAQGIIYLCEELIRQNDAFPSQFQSQVASTDVIEQEILEQIREIDRMKASMEAISQAMPIPGMDAMANLFTVMRKKLQEKLDHLYQFNQTSSNNYSTALQLAASIAAGLAEVQSGKGFSPASGTFSTQGLNMEWTTSIQAITEERARQAANSIEEGEMCGKLPEKSTGEKIWDGIVEGTGQAVSDTIDGIKALGDWETWENMGNAALHPIDTLSTMYNTLSDSFINDVINGDAESRAKWGSYALTQVGLGLIGDKGLSKASKLGQAGKVTKLAKNKIPQAVSHITSNLQMGDRFAFAGGNSLRFRFDTPDFKKAEEKLSTYQFARGESNYGGSNFVNENHRSSLSNREIISNLQHTEKFRPNTLKHILEGEINWRGDAMGYHTEVLENTPGKIISGTEEILNDQGIYKARVEVNGTPKTGNRGFSTFFPKDWSPQKIVDNINEAYNNRTYEFGNTYSGIGSEGIRISMYIDGNGKIISAFPAE.

An LXG domain is found at 1–217; the sequence is MSLNMYLGEV…ARQAANSIEE (217 aa).

The protein in the N-terminal section; belongs to the LXG family. It in the C-terminal section; belongs to the bacterial EndoU family. In terms of assembly, probably interacts with cognate immunity protein BC_0921. The interaction inhibits the toxic activity of BC_0921.

It is found in the secreted. Its function is as follows. Toxic component of an LXG toxin-immunity module. The C-terminus (residues 322-545) has RNase activity in E.coli which is neutralized by cognate immunity protein BC_0921, but not by immunity proteins specific to other toxins with the LXG domain. Degrades 5S rRNA and several tRNAs in vitro; cleavage is endonucleolytic within the anticodon loop for tRNA(GAU-Ile) and tRNA(UUC-Glu) but total for 5S rRNA and at least one other tRNA. RNase activity is suppressed by cognate immunity protein BC_0921. This chain is Toxin BC_0920, found in Bacillus cereus (strain ATCC 14579 / DSM 31 / CCUG 7414 / JCM 2152 / NBRC 15305 / NCIMB 9373 / NCTC 2599 / NRRL B-3711).